Reading from the N-terminus, the 218-residue chain is Serine/threonine-protein phosphatase 2 (218 aa).

Mn(2+)-binding residues include aspartate 22, histidine 24, aspartate 51, and asparagine 77. Histidine 78 acts as the Proton donor in catalysis. Histidine 187 serves as a coordination point for Mn(2+).

It belongs to the PPP phosphatase family. PP-1 subfamily. The cofactor is Mn(2+).

It catalyses the reaction O-phospho-L-seryl-[protein] + H2O = L-seryl-[protein] + phosphate. The catalysed reaction is O-phospho-L-threonyl-[protein] + H2O = L-threonyl-[protein] + phosphate. Inhibited by cadmium, copper, zinc when added activity but with less efficiency. In terms of biological role, can hydrolyze phosphorylated Ser-, Thr- or Tyr-substrates in vitro. The natural substrate is unknown. In Salmonella typhimurium (strain LT2 / SGSC1412 / ATCC 700720), this protein is Serine/threonine-protein phosphatase 2 (pphB).